We begin with the raw amino-acid sequence, 264 residues long: Intermembrane phospholipid transport system ATP-binding protein MlaF (264 aa).

Positions 6 to 242 (IEVKNLTFKR…QDLRVVQFLK (237 aa)) constitute an ABC transporter domain. Residue 38-45 (GPSGIGKT) coordinates ATP.

The protein belongs to the ABC transporter superfamily. MlaF family. In terms of assembly, the complex is composed of two ATP-binding proteins (MlaF), two transmembrane proteins (MlaE), two cytoplasmic solute-binding proteins (MlaB) and six periplasmic solute-binding proteins (MlaD).

Its subcellular location is the cell inner membrane. In terms of biological role, part of the ABC transporter complex MlaFEDB, which is involved in a phospholipid transport pathway that maintains lipid asymmetry in the outer membrane by retrograde trafficking of phospholipids from the outer membrane to the inner membrane. Responsible for energy coupling to the transport system. In Haemophilus influenzae (strain ATCC 51907 / DSM 11121 / KW20 / Rd), this protein is Intermembrane phospholipid transport system ATP-binding protein MlaF.